The sequence spans 894 residues: Low-affinity phosphate transporter PHO91 (894 aa).

Residues M1 to N256 form the SPX domain. 2 disordered regions span residues Q124–M160 and R293–N321. A compositionally biased stretch (basic residues) spans R132–R144. Positions T151–M160 are enriched in polar residues. 3 positions are modified to phosphoserine: S295, S311, and S312. Transmembrane regions (helical) follow at residues L430–F450, T474–I494, F511–A531, F557–A577, A602–S622, F642–I662, F682–L702, I706–G726, F738–S758, P777–S797, T799–G819, L824–F844, and S874–F894.

It belongs to the CitM (TC 2.A.11) transporter family. In terms of processing, ubiquitinated by RSP5. RSP5-mediated ubiquitination initiates internalization and degradation by the endocytic pathway.

It localises to the vacuole membrane. Vacuolar phosphate transporter that probably exports phosphate from the vacuolar lumen to the cytosol. This chain is Low-affinity phosphate transporter PHO91 (PHO91), found in Saccharomyces cerevisiae (strain ATCC 204508 / S288c) (Baker's yeast).